We begin with the raw amino-acid sequence, 356 residues long: Tyrosine recombinase XerS (356 aa).

The region spanning 16 to 121 (IMPWYVLEYY…ALSSLFKYLT (106 aa)) is the Core-binding (CB) domain. One can recognise a Tyr recombinase domain in the interval 169–354 (EFLEYIDCEY…VNDEQKNALD (186 aa)). Residues Arg210, Lys234, His306, Arg309, and His332 contribute to the active site. The active-site O-(3'-phospho-DNA)-tyrosine intermediate is Tyr341.

The protein belongs to the 'phage' integrase family. XerS subfamily.

The protein localises to the cytoplasm. Its activity is regulated as follows. FtsK is required for recombination. Its function is as follows. Site-specific tyrosine recombinase, which acts by catalyzing the cutting and rejoining of the recombining DNA molecules. Essential to convert dimers of the bacterial chromosome into monomers to permit their segregation at cell division. The sequence is that of Tyrosine recombinase XerS from Streptococcus agalactiae serotype Ia (strain ATCC 27591 / A909 / CDC SS700).